A 122-amino-acid chain; its full sequence is Large ribosomal subunit protein uL14 (122 aa).

This sequence belongs to the universal ribosomal protein uL14 family. In terms of assembly, part of the 50S ribosomal subunit. Forms a cluster with proteins L3 and L19. In the 70S ribosome, L14 and L19 interact and together make contacts with the 16S rRNA in bridges B5 and B8.

Binds to 23S rRNA. Forms part of two intersubunit bridges in the 70S ribosome. The chain is Large ribosomal subunit protein uL14 from Nitratiruptor sp. (strain SB155-2).